Here is a 534-residue protein sequence, read N- to C-terminus: Monolignol oxidoreductase AtBBE-like 13 (534 aa).

An N-terminal signal peptide occupies residues 1–29 (MAFVLMNNTNAFLVTLLLLSLSYIPLSFS). 2 N-linked (GlcNAc...) asparagine glycosylation sites follow: Asn7 and Asn59. A disulfide bridge links Cys38 with Cys102. Residues 117-181 (HDYEGLSYVS…KIHGFPAGLC (65 aa)) constitute a cross-link (6-(S-cysteinyl)-8alpha-(pros-histidyl)-FAD (His-Cys)).

It belongs to the oxygen-dependent FAD-linked oxidoreductase family. Requires FAD as cofactor. Post-translationally, the FAD cofactor is bound via a bicovalent 6-S-cysteinyl, 8alpha-N1-histidyl FAD linkage.

The protein localises to the secreted. Its subcellular location is the cell wall. The enzyme catalyses (E)-4-coumaroyl alcohol + A = (E)-4-coumaraldehyde + AH2. It catalyses the reaction (E)-coniferol + A = (E)-coniferaldehyde + AH2. The catalysed reaction is (E)-sinapyl alcohol + A = (E)-sinapaldehyde + AH2. The protein operates within phenylpropanoid metabolism. Its function is as follows. Mediates oxidation of p-hydroxylated derivatives of cinnamyl alcohol (i.e. the monolignols p-coumaryl-, coniferyl-, and sinapyl alcohol) to their corresponding aldehydes. The electron acceptor required for these reactions is not known, but does not seem to be dioxygen. Is much less efficient towards cinnamyl alcohol. The protein is Monolignol oxidoreductase AtBBE-like 13 of Arabidopsis thaliana (Mouse-ear cress).